Here is a 520-residue protein sequence, read N- to C-terminus: Keratin, type II cytoskeletal 8 (520 aa).

Residues 1–19 show a composition bias toward low complexity; that stretch reads MSTYSKKTSYTVKSSSSGS. Residues 1 to 20 are disordered; the sequence is MSTYSKKTSYTVKSSSSGSI. The tract at residues 2 to 114 is head; that stretch reads STYSKKTSYT…DPNIQIVRTQ (113 aa). The residue at position 28 (Ser-28) is a Phosphoserine. The interval 115–150 is coil 1A; sequence EKEQIKTLNNRFASFIDKVRFLEQQNKMLETKWSLL. Residues 115–426 enclose the IF rod domain; the sequence is EKEQIKTLNN…KLLEGEEDRL (312 aa). The interval 151-166 is linker 1; the sequence is QNQTATRSNIDAMFEA. Residues 168–259 are coil 1B; the sequence is IANLRRQLDS…QIFEEEIREL (92 aa). A linker 12 region spans residues 260 to 283; the sequence is QSQIKDTSVVVEMDNSRNLDMDAI. A coil 2 region spans residues 284–422; it reads VAEVRAQYED…ATYRKLLEGE (139 aa). The segment at 423–520 is tail; sequence EDRLATGIKA…VSESSEVVQD (98 aa).

It belongs to the intermediate filament family. In terms of assembly, heterotetramer of two type I and two type II keratins. Keratin-8 associates with keratin-18. Expressed in simple epithelia.

It localises to the cytoplasm. The protein localises to the nucleus. The protein resides in the nucleoplasm. Its subcellular location is the nucleus matrix. Together with KRT19, helps to link the contractile apparatus to dystrophin at the costameres of striated muscle. In Danio rerio (Zebrafish), this protein is Keratin, type II cytoskeletal 8.